The primary structure comprises 146 residues: Hemoglobin subunit beta-1 (146 aa).

Residues 2–146 (HWTAEEKSAI…VAHALAHRYH (145 aa)) enclose the Globin domain. The heme b site is built by H63 and H92.

Belongs to the globin family. In terms of assembly, heterotetramer of two alpha chains and two beta chains. Red blood cells.

Involved in oxygen transport from the lung to the various peripheral tissues. This is Hemoglobin subunit beta-1 from Drymarchon melanurus erebennus (Texas indigo snake).